Here is a 199-residue protein sequence, read N- to C-terminus: Recombination protein RecR (199 aa).

A C4-type zinc finger spans residues 57 to 72 (CQSCRTYTEETLCPIC). The Toprim domain occupies 81 to 176 (STICVVETPA…MISRIAHGVP (96 aa)).

This sequence belongs to the RecR family.

Functionally, may play a role in DNA repair. It seems to be involved in an RecBC-independent recombinational process of DNA repair. It may act with RecF and RecO. This is Recombination protein RecR from Shewanella baltica (strain OS155 / ATCC BAA-1091).